The chain runs to 502 residues: UDP-glucuronosyltransferase 2C1 (502 aa).

Asparagine 177 and asparagine 288 each carry an N-linked (GlcNAc...) asparagine glycan. A helical membrane pass occupies residues 466-481 (VVVFLLTCVATIIFLA).

Belongs to the UDP-glycosyltransferase family.

It is found in the microsome membrane. Its subcellular location is the endoplasmic reticulum membrane. The enzyme catalyses glucuronate acceptor + UDP-alpha-D-glucuronate = acceptor beta-D-glucuronoside + UDP + H(+). UDPGT is of major importance in the conjugation and subsequent elimination of potentially toxic xenobiotics and endogenous compounds. In Oryctolagus cuniculus (Rabbit), this protein is UDP-glucuronosyltransferase 2C1 (UGT2C1).